Reading from the N-terminus, the 1322-residue chain is Serine/threonine-protein phosphatase UIS2 (1322 aa).

The signal sequence occupies residues 1-22; that stretch reads MNISKFFLIFIPLVLFKYPANN. Residues 1–535 form an interaction with phosphorylated eIF2alpha region; that stretch reads MNISKFFLIF…NELKSTSNAM (535 aa). Composition is skewed to basic and acidic residues over residues 267-279 and 288-326; these read EKSA…KELN and NSKK…KSEN. Disordered stretches follow at residues 267-326, 613-646, 1066-1087, and 1170-1196; these read EKSA…KSEN, NTNT…SENN, NETP…IQPN, and EVPD…NKDD. A compositionally biased stretch (low complexity) spans 631–646; that stretch reads NNYTDGNEGNNNSENN.

Mn(2+) serves as cofactor.

It catalyses the reaction O-phospho-L-seryl-[protein] + H2O = L-seryl-[protein] + phosphate. Its function is as follows. Protein phosphatase which dephosphorylates 'Ser-59' of translation factor eIF2alpha during the liver stage, thus enabling protein translation. The polypeptide is Serine/threonine-protein phosphatase UIS2 (Plasmodium berghei (strain Anka)).